Reading from the N-terminus, the 832-residue chain is Dolichyl-phosphate-mannose--protein mannosyltransferase 6 (832 aa).

Residues 1 to 44 (MATGYSTGVSPFDLDENNHNDSIHHRHQNHHSQSHDSSGERDDT) are disordered. N-linked (GlcNAc...) asparagine glycans are attached at residues Asn-20 and Asn-59. Helical transmembrane passes span 135-155 (FYFDVHPPLGKLLIGLSGYLA), 175-194 (YVFMRIFNCFFGILVTPLAY), 206-227 (TCWLIAFMVIFEQLSLTLSKFI), 232-252 (MLLFFTVLTMYCLVKVHTLAI), 266-286 (LEIKWYILTGISIGCVCSVKW), 293-311 (ALVGFYTIVDLWIKFYQTF), and 327-347 (LIHWVVRIFTLIIIPMTIYVA). An N-linked (GlcNAc...) asparagine glycan is attached at Asn-357. The MIR 1 domain occupies 383–437 (PRSVAFGSLVTIRSQGLSPNLIHSHPHNYPQGSQEQQVTTYGFKDDNNEFLFEFG). N-linked (GlcNAc...) asparagine glycosylation occurs at Asn-453. MIR domains are found at residues 466–522 (HVII…IEIQ) and 537–595 (PSEI…IEKH). The next 4 membrane-spanning stretches (helical) occupy residues 676 to 696 (ITWISTIALIVCPLYLLVVGI), 723 to 743 (LLAARALLPLAGWVLHYVPFI), 755 to 775 (VPALYFAIFVAGFIVDAILNL), and 787 to 807 (IFKVVIYSTLYLVICISFWYF).

It belongs to the glycosyltransferase 39 family.

It localises to the endoplasmic reticulum membrane. The catalysed reaction is a di-trans,poly-cis-dolichyl beta-D-mannosyl phosphate + L-seryl-[protein] = 3-O-(alpha-D-mannosyl)-L-seryl-[protein] + a di-trans,poly-cis-dolichyl phosphate + H(+). The enzyme catalyses a di-trans,poly-cis-dolichyl beta-D-mannosyl phosphate + L-threonyl-[protein] = 3-O-(alpha-D-mannosyl)-L-threonyl-[protein] + a di-trans,poly-cis-dolichyl phosphate + H(+). Its pathway is protein modification; protein glycosylation. Protein mannosyltransferase (PMT) involved in hyphal morphogenesis and drug sensitivity. Transfers mannose from Dol-P-mannose to Ser or Thr residues on proteins. PMT1, PMT2 and PMT4 account for most of the protein-O-glycosylation activity, while PMT5 and PMT6 may specifically modulate a much narrower spectrum of target proteins. Required for biofilm formation and virulence. This chain is Dolichyl-phosphate-mannose--protein mannosyltransferase 6 (PMT6), found in Candida albicans (strain SC5314 / ATCC MYA-2876) (Yeast).